The following is a 176-amino-acid chain: Ribosome maturation factor RimM (176 aa).

The PRC barrel domain occupies 101-173 (EGEYYHYRLI…RMVVDLPEGL (73 aa)).

Belongs to the RimM family. Binds ribosomal protein uS19.

Its subcellular location is the cytoplasm. Functionally, an accessory protein needed during the final step in the assembly of 30S ribosomal subunit, possibly for assembly of the head region. Essential for efficient processing of 16S rRNA. May be needed both before and after RbfA during the maturation of 16S rRNA. It has affinity for free ribosomal 30S subunits but not for 70S ribosomes. The chain is Ribosome maturation factor RimM from Syntrophobacter fumaroxidans (strain DSM 10017 / MPOB).